Here is a 200-residue protein sequence, read N- to C-terminus: Protein Syd (200 aa).

Belongs to the Syd family.

The protein resides in the cell inner membrane. Its function is as follows. Interacts with the SecY protein in vivo. May bind preferentially to an uncomplexed state of SecY, thus functioning either as a chelating agent for excess SecY in the cell or as a regulatory factor that negatively controls the translocase function. The sequence is that of Protein Syd from Colwellia psychrerythraea (strain 34H / ATCC BAA-681) (Vibrio psychroerythus).